Consider the following 1669-residue polypeptide: Collagen alpha-1(IV) chain (1669 aa).

Positions 1 to 27 (MGPRLGVWLLLLLAALLLHEESSRAAA) are cleaved as a signal peptide. Residues 28-172 (KGGCAGSGCG…LGHIPGTLLK (145 aa)) constitute a propeptide, N-terminal propeptide (7S domain). The tract at residues 50 to 1445 (ERGLPGLQGV…PPGTPSVDHG (1396 aa)) is disordered. A triple-helical region region spans residues 173-1440 (GERGYPGQPG…PGSMGPPGTP (1268 aa)). The segment covering 196–214 (VGPPGFTGPPGPPGPPGPP) has biased composition (pro residues). A 3-hydroxyproline mark is found at Pro204, Pro207, and Pro210. 2 stretches are compositionally biased toward basic and acidic residues: residues 254–263 (TAMRGEKGQK) and 289–298 (PGKDGEKGEK). The span at 347–356 (GYPGGPGAKG) shows a compositional bias: gly residues. Low complexity predominate over residues 357 to 366 (ETGPKGFPGI). The segment covering 367-376 (PGQPGPPGFP) has biased composition (pro residues). The span at 396 to 412 (PGLPGVSLPGPSGRDGL) shows a compositional bias: low complexity. Pro residues-rich tracts occupy residues 413-424 (PGPPGPPGPPGQ) and 436-448 (PGPPGDQGPPGIP). Low complexity predominate over residues 485–494 (PGEIGFPGQP). Basic and acidic residues-rich tracts occupy residues 497-508 (KGDRGLPGRDGL) and 535-545 (FDIRLKGDKGD). Gly residues predominate over residues 586–595 (GPPGGVGFPG). Pro587 and Pro602 each carry 3-hydroxyproline. A 4-hydroxyproline modification is found at Pro603. 3-hydroxyproline is present on Pro605. 4-hydroxyproline is present on residues Pro606, Pro623, Pro626, Pro629, and Pro632. Position 647 is a 3-hydroxyproline (Pro647). Gly residues-rich tracts occupy residues 758 to 767 (GNVGGPGIPG) and 797 to 817 (GVPGIGPPGAMGPPGGQGPPG). Over residues 847–871 (SQGLPGLTGQSGLPGLPGQQGTPGQ) the composition is skewed to low complexity. Over residues 937-955 (SMDKVDMGSMKGEKGDQGE) the composition is skewed to basic and acidic residues. Gly residues predominate over residues 1011-1020 (GSAGGMGLPG). 3 stretches are compositionally biased toward low complexity: residues 1030 to 1040 (IPGPQGIPGLP), 1101 to 1114 (SPGSVGYPGSPGLP), and 1193 to 1212 (FPGLSGSPGIPGSKGEQGFM). Pro1214 carries the 3-hydroxyproline modification. Pro residues predominate over residues 1247–1258 (PGRPGPMGPPGL). The span at 1290–1299 (GMPGIGGSPG) shows a compositional bias: gly residues. The segment covering 1413–1428 (FGPPGPRGFPGPPGPD) has biased composition (pro residues). A 3-hydroxyproline modification is found at Pro1424. Residues 1445-1669 (GFLVTRHSQT…SRCQVCMRRT (225 aa)) form the Collagen IV NC1 domain. 6 disulfides stabilise this stretch: Cys1460-Cys1551, Cys1493-Cys1548, Cys1505-Cys1511, Cys1570-Cys1665, Cys1604-Cys1662, and Cys1616-Cys1622. Residue Met1533 forms an S-Lysyl-methionine sulfilimine (Met-Lys) (interchain with K-1651) linkage. Lys1651 is covalently cross-linked (S-Lysyl-methionine sulfilimine (Lys-Met) (interchain with M-1533)).

Belongs to the type IV collagen family. As to quaternary structure, there are six type IV collagen isoforms, alpha 1(IV)-alpha 6(IV), each of which can form a triple helix structure with 2 other chains to generate type IV collagen network. Interacts with EFEMP2. Lysines at the third position of the tripeptide repeating unit (G-X-Y) are hydroxylated in all cases. The modified lysines can be O-glycosylated. Post-translationally, contains 4-hydroxyproline. Prolines at the third position of the tripeptide repeating unit (G-X-Y) are hydroxylated in some or all of the chains. In terms of processing, contains 3-hydroxyproline. This modification occurs on the first proline residue in the sequence motif Gly-Pro-Hyp, where Hyp is 4-hydroxyproline. Type IV collagens contain numerous cysteine residues which are involved in inter- and intramolecular disulfide bonding. 12 of these, located in the NC1 domain, are conserved in all known type IV collagens. Post-translationally, the trimeric structure of the NC1 domains is stabilized by covalent bonds (sulfilimine cross-links) between Lys and Met residues. These cross-links are important for the mechanical stability of the basement membrane. Sulfilimine cross-link is catalyzed by PXDN. In terms of processing, proteolytic processing produces the C-terminal NC1 peptide, arresten.

Its subcellular location is the secreted. It localises to the extracellular space. It is found in the extracellular matrix. The protein localises to the basement membrane. Its function is as follows. Type IV collagen is the major structural component of glomerular basement membranes (GBM), forming a 'chicken-wire' meshwork together with laminins, proteoglycans and entactin/nidogen. Arresten, comprising the C-terminal NC1 domain, inhibits angiogenesis and tumor formation. The C-terminal half is found to possess the anti-angiogenic activity. Specifically inhibits endothelial cell proliferation, migration and tube formation. The polypeptide is Collagen alpha-1(IV) chain (Bos taurus (Bovine)).